The primary structure comprises 803 residues: Subtilisin-like protease SBT5.5 (803 aa).

The signal sequence occupies residues 1 to 22 (MKRIFGIFIFLSLLLFLVPLLA). The propeptide at 23–112 (SCTKEKQVYI…KSDPRKYKIH (90 aa)) is activation peptide. One can recognise an Inhibitor I9 domain in the interval 30-108 (VYIVYFGEHK…VSVFKSDPRK (79 aa)). The Peptidase S8 domain maps to 140 to 656 (KYDVNDRFRV…SRHFRPTKAA (517 aa)). Residue D169 is the Charge relay system of the active site. N202 carries N-linked (GlcNAc...) asparagine glycosylation. Catalysis depends on H244, which acts as the Charge relay system. The 96-residue stretch at 409 to 504 (YAPLVYAPDV…VFSSTVDRIL (96 aa)) folds into the PA domain. S589 functions as the Charge relay system in the catalytic mechanism. Residue N725 is glycosylated (N-linked (GlcNAc...) asparagine).

Belongs to the peptidase S8 family.

It is found in the secreted. This Arabidopsis thaliana (Mouse-ear cress) protein is Subtilisin-like protease SBT5.5.